Here is a 433-residue protein sequence, read N- to C-terminus: Homogentisate 1,2-dioxygenase (433 aa).

Residue His-288 is the Proton acceptor of the active site. Fe cation contacts are provided by His-331 and Glu-337. The homogentisate site is built by Tyr-346 and His-367. His-367 contacts Fe cation.

It belongs to the homogentisate dioxygenase family. In terms of assembly, hexamer; dimer of trimers. It depends on Fe cation as a cofactor.

It catalyses the reaction homogentisate + O2 = 4-maleylacetoacetate + H(+). It participates in amino-acid degradation; L-phenylalanine degradation; acetoacetate and fumarate from L-phenylalanine: step 4/6. Its function is as follows. Involved in the catabolism of homogentisate (2,5-dihydroxyphenylacetate or 2,5-OH-PhAc), a central intermediate in the degradation of phenylalanine and tyrosine. Catalyzes the oxidative ring cleavage of the aromatic ring of homogentisate to yield maleylacetoacetate. This Pseudomonas entomophila (strain L48) protein is Homogentisate 1,2-dioxygenase.